Consider the following 463-residue polypeptide: Phytase A (463 aa).

The N-terminal stretch at 1-19 is a signal peptide; sequence MAFFTVALSLYYLLSRVST. The N-linked (GlcNAc...) asparagine glycan is linked to Asn26. A disulfide bridge links Cys29 with Cys38. A glycan (N-linked (GlcNAc...) asparagine) is linked at Asn41. 1D-myo-inositol hexakisphosphate is bound by residues Gln48, Tyr49, Arg79, His80, Arg83, and Thr86. 4 cysteine pairs are disulfide-bonded: Cys69–Cys410, Cys211–Cys460, Cys260–Cys278, and Cys431–Cys439. His80 serves as the catalytic Nucleophile. N-linked (GlcNAc...) asparagine glycosylation is found at Asn103 and Asn118. Arg163 contributes to the 1D-myo-inositol hexakisphosphate binding site. A glycan (N-linked (GlcNAc...) asparagine) is linked at Asn203. Residue Asp207 coordinates 1D-myo-inositol hexakisphosphate. The N-linked (GlcNAc...) asparagine glycan is linked to Asn226. Lys297 provides a ligand contact to 1D-myo-inositol hexakisphosphate. N-linked (GlcNAc...) asparagine glycans are attached at residues Asn331 and Asn335. 2 residues coordinate 1D-myo-inositol hexakisphosphate: His357 and Asp358. Residue Asn372 is glycosylated (N-linked (GlcNAc...) asparagine).

This sequence belongs to the histidine acid phosphatase family. Monomer. Post-translationally, seems to be cleaved into at least two pieces, most likely due to proteases in the supernatant. The N-terminal fragment, called phyB seems to retain phytase activity.

It localises to the secreted. It catalyses the reaction 1D-myo-inositol hexakisphosphate + H2O = 1D-myo-inositol 1,2,4,5,6-pentakisphosphate + phosphate. The catalysed reaction is 1D-myo-inositol 1,2,4,5,6-pentakisphosphate + H2O = 1D-myo-inositol 1,2,5,6-tetrakisphosphate + phosphate. It carries out the reaction 1D-myo-inositol 1,2,5,6-tetrakisphosphate + H2O = 1D-myo-inositol 1,2,6-trisphosphate + phosphate. The enzyme catalyses 1D-myo-inositol 1,2,6-trisphosphate + H2O = 1D-myo-inositol 1,2-bisphosphate + phosphate. It catalyses the reaction 1D-myo-inositol 1,2-bisphosphate + H2O = 1D-myo-inositol 2-phosphate + phosphate. Its function is as follows. Catalyzes the phosphate monoester hydrolysis of phytic acid (myo-inositol hexakisphosphate), which results in the stepwise formation of myo-inositol pentakis-, tetrakis-, tris-, bis-, and monophosphates, as well as the liberation of inorganic phosphate. Myo-inositol 2-monophosphate is the end product. Has a broad substrate specificity and is also able to dephosphorylate other classic acid phosphatase substrates such as p-nitrophenyl phosphate, phenyl phosphate, fructose 1,6-bisphosphate, fructose 6-phosphate, glucose 6-phosphate, ribose 5-phosphate, alpha-glycerophosphate, beta-glycerophosphate, 3-phosphoglycerate, as well as ADP and ATP. The sequence is that of Phytase A from Emericella nidulans (strain FGSC A4 / ATCC 38163 / CBS 112.46 / NRRL 194 / M139) (Aspergillus nidulans).